Here is a 614-residue protein sequence, read N- to C-terminus: Serine/threonine-protein kinase Pkn1 (614 aa).

The region spanning 13 to 276 (YKVIAELGHG…TSGEQLQVTL (264 aa)) is the Protein kinase domain. Residues 19-27 (LGHGLWSRD) and Lys42 each bind ATP.

It belongs to the protein kinase superfamily. Ser/Thr protein kinase family. Interacts with PknD, interacts with and phosphorylates IncG. Post-translationally, autophosphorylates on serine and threonine residues. Present in elementary bodies 40 hours post-infection as 2 proteins of approximately 70 and 65 kDa; the smaller one may be due to differential phosphorylation or degradation.

It carries out the reaction L-seryl-[protein] + ATP = O-phospho-L-seryl-[protein] + ADP + H(+). The enzyme catalyses L-threonyl-[protein] + ATP = O-phospho-L-threonyl-[protein] + ADP + H(+). Functionally, together with the serine/threonine kinase PknD, may play a role in specific interactions with host proteins during host intracellular growth. Autophosphorylates and phosphorylates IncG, an inclusion-membrane protein required for the modification of the nascent chlamydial inclusion. The chain is Serine/threonine-protein kinase Pkn1 (pkn1) from Chlamydia trachomatis serovar L2 (strain ATCC VR-902B / DSM 19102 / 434/Bu).